The following is a 1164-amino-acid chain: DNA-directed RNA polymerase subunit beta (1164 aa).

Disordered regions lie at residues Arg975–Asn994 and Ala1143–Ser1164. 2 stretches are compositionally biased toward basic and acidic residues: residues Arg981 to Gly991 and Ser1152 to Ser1164.

It belongs to the RNA polymerase beta chain family. As to quaternary structure, the RNAP catalytic core consists of 2 alpha, 1 beta, 1 beta' and 1 omega subunit. When a sigma factor is associated with the core the holoenzyme is formed, which can initiate transcription.

The catalysed reaction is RNA(n) + a ribonucleoside 5'-triphosphate = RNA(n+1) + diphosphate. In terms of biological role, DNA-dependent RNA polymerase catalyzes the transcription of DNA into RNA using the four ribonucleoside triphosphates as substrates. The sequence is that of DNA-directed RNA polymerase subunit beta from Corynebacterium jeikeium (strain K411).